Consider the following 178-residue polypeptide: Acireductone dioxygenase (178 aa).

The tract at residues 1–22 is disordered; sequence MKAYWYDNKPGDQREPHDSGRP. The segment covering 9 to 22 has biased composition (basic and acidic residues); sequence KPGDQREPHDSGRP. 4 residues coordinate Fe(2+): His81, His83, Glu87, and His126. Positions 81, 83, 87, and 126 each coordinate Ni(2+).

Belongs to the acireductone dioxygenase (ARD) family. The cofactor is Fe(2+). Ni(2+) is required as a cofactor.

Its subcellular location is the cytoplasm. It localises to the nucleus. The catalysed reaction is 1,2-dihydroxy-5-(methylsulfanyl)pent-1-en-3-one + O2 = 4-methylsulfanyl-2-oxobutanoate + formate + 2 H(+). It catalyses the reaction 1,2-dihydroxy-5-(methylsulfanyl)pent-1-en-3-one + O2 = 3-(methylsulfanyl)propanoate + CO + formate + 2 H(+). Its pathway is amino-acid biosynthesis; L-methionine biosynthesis via salvage pathway; L-methionine from S-methyl-5-thio-alpha-D-ribose 1-phosphate: step 5/6. Functionally, catalyzes 2 different reactions between oxygen and the acireductone 1,2-dihydroxy-3-keto-5-methylthiopentene (DHK-MTPene) depending upon the metal bound in the active site. Fe-containing acireductone dioxygenase (Fe-ARD) produces formate and 2-keto-4-methylthiobutyrate (KMTB), the alpha-ketoacid precursor of methionine in the methionine recycle pathway. Ni-containing acireductone dioxygenase (Ni-ARD) produces methylthiopropionate, carbon monoxide and formate, and does not lie on the methionine recycle pathway. This chain is Acireductone dioxygenase (adi1), found in Emericella nidulans (strain FGSC A4 / ATCC 38163 / CBS 112.46 / NRRL 194 / M139) (Aspergillus nidulans).